Reading from the N-terminus, the 308-residue chain is Beta-carotene hydroxylase 2, chloroplastic (308 aa).

The transit peptide at 1 to 59 (MAAARISFSSTSRTSYYRHSPFLGPKPTPTTPSVYPITPFSPNLGSILRCRRRPSFTVC) directs the protein to the chloroplast. 2 helical membrane-spanning segments follow: residues 105-125 (YLVA…MAVY) and 139-159 (FSEM…MEFW). A Fatty acid hydroxylase domain is found at 152–279 (AAVGMEFWAR…KFNGVPYGLF (128 aa)). The Histidine box-1 motif lies at 164-169 (HKALWH). Positions 176–180 (HESHH) match the Histidine box-2 motif. 2 consecutive transmembrane segments (helical) span residues 191 to 211 (DVFA…GFFH) and 215 to 235 (IPGL…AYMF). Positions 237–242 (HDGLVH) match the Histidine box-3 motif. Residues 263–267 (HSLHH) carry the Histidine box-4 motif.

Belongs to the sterol desaturase family.

The protein localises to the plastid. Its subcellular location is the chloroplast membrane. The catalysed reaction is all-trans-beta-carotene + 4 reduced [2Fe-2S]-[ferredoxin] + 2 O2 + 4 H(+) = all-trans-zeaxanthin + 4 oxidized [2Fe-2S]-[ferredoxin] + 2 H2O. It catalyses the reaction all-trans-beta-carotene + 2 reduced [2Fe-2S]-[ferredoxin] + O2 + 2 H(+) = beta-cryptoxanthin + 2 oxidized [2Fe-2S]-[ferredoxin] + H2O. The enzyme catalyses beta-cryptoxanthin + 2 reduced [2Fe-2S]-[ferredoxin] + O2 + 2 H(+) = all-trans-zeaxanthin + 2 oxidized [2Fe-2S]-[ferredoxin] + H2O. Inhibited by o-phenanthroline and 8-hydroxyquinoline. Functionally, nonheme diiron monooxygenase involved in the biosynthesis of xanthophylls. Specific for beta-ring hydroxylations of beta-carotene. Produces beta-cryptoxanthin and zeaxanthin. Uses ferredoxin as an electron donor. This Capsicum annuum (Capsicum pepper) protein is Beta-carotene hydroxylase 2, chloroplastic.